A 433-amino-acid polypeptide reads, in one-letter code: Histidinol dehydrogenase (433 aa).

Positions 236, 258, and 261 each coordinate substrate. Residues glutamine 258 and histidine 261 each contribute to the Zn(2+) site. Active-site proton acceptor residues include glutamate 325 and histidine 326. Histidine 326, aspartate 359, glutamate 413, and histidine 418 together coordinate substrate. Aspartate 359 provides a ligand contact to Zn(2+). Histidine 418 is a binding site for Zn(2+).

Belongs to the histidinol dehydrogenase family. Zn(2+) is required as a cofactor.

The catalysed reaction is L-histidinol + 2 NAD(+) + H2O = L-histidine + 2 NADH + 3 H(+). The protein operates within amino-acid biosynthesis; L-histidine biosynthesis; L-histidine from 5-phospho-alpha-D-ribose 1-diphosphate: step 9/9. Catalyzes the sequential NAD-dependent oxidations of L-histidinol to L-histidinaldehyde and then to L-histidine. This chain is Histidinol dehydrogenase, found in Pseudoalteromonas translucida (strain TAC 125).